An 85-amino-acid polypeptide reads, in one-letter code: Homeobox protein liguleless 3 (85 aa).

The region spanning Glu1–Phe21 is the ELK domain. A DNA-binding region (homeobox; TALE-type) is located at residues Leu22–Ser85.

This sequence belongs to the TALE/KNOX homeobox family.

The protein resides in the nucleus. In terms of biological role, probably binds to the DNA sequence 5'-TGAC-3'. This Zea mays (Maize) protein is Homeobox protein liguleless 3 (LG3).